A 167-amino-acid polypeptide reads, in one-letter code: uncharacterized protein (167 aa).

A compositionally biased stretch (basic residues) spans 1–10 (MPLRRCRAWR). Residues 1–23 (MPLRRCRAWRGHSQPGTGSRSNE) are disordered.

This is an uncharacterized protein from Sinorhizobium fredii (strain NBRC 101917 / NGR234).